The primary structure comprises 466 residues: Soluble pyridine nucleotide transhydrogenase (466 aa).

Residue 36–45 coordinates FAD; sequence ERYHNIGGGC.

This sequence belongs to the class-I pyridine nucleotide-disulfide oxidoreductase family. Requires FAD as cofactor.

It localises to the cytoplasm. The enzyme catalyses NAD(+) + NADPH = NADH + NADP(+). Conversion of NADPH, generated by peripheral catabolic pathways, to NADH, which can enter the respiratory chain for energy generation. The chain is Soluble pyridine nucleotide transhydrogenase from Erwinia tasmaniensis (strain DSM 17950 / CFBP 7177 / CIP 109463 / NCPPB 4357 / Et1/99).